Reading from the N-terminus, the 272-residue chain is MSLLLLQLLVLSCLGDTEPQPDSQQRKRRPLQHLFYLDRNLLESQSFHELVGENPVGVKETQEEPSFFIAFPQTAGESQKQGEKKMSRFILPNAELYAHQDLRTWAAPKEISPVENFSPSYYSNKRDVEPPYRKDAKKFWDHFMLRKNSASEEVVLPIKTNEMHQETCRTLPFSQSVAHESCEKVIVQNNLCFGKCSSFHVPGPDDRLYTFCSKCLPTKFSMKHLDLNCTSSVPVVKKVMIVEECNCETQKIEDPLLGSRQSDFLGNLPEHN.

The N-terminal stretch at 1–19 (MSLLLLQLLVLSCLGDTEP) is a signal peptide. Intrachain disulfides connect cysteine 168/cysteine 215, cysteine 182/cysteine 229, cysteine 192/cysteine 245, and cysteine 196/cysteine 247. The region spanning 168 to 253 (CRTLPFSQSV…ECNCETQKIE (86 aa)) is the CTCK domain. An N-linked (GlcNAc...) asparagine glycan is attached at asparagine 228.

This sequence belongs to the DAN family.

The protein resides in the secreted. Cytokine that acts as a regulator of the activity of Nodal/BMP pathways during the establishment of bilateral asymmetry in the head and trunk of the embryo. The sequence is that of Cerberus (CER1) from Gallus gallus (Chicken).